Consider the following 904-residue polypeptide: Myelin regulatory factor-like protein (904 aa).

A disordered region spans residues 46-132 (LQRQLPDTPP…ATCRHQTGPS (87 aa)). Positions 100-117 (PSQSMAGQTHSSFQNGYP) are enriched in polar residues. Residues 108–400 (THSSFQNGYP…SNPGQFENDS (293 aa)) constitute a DNA-binding region (NDT80). The region spanning 446–554 (SDSRVKENIQ…KLTNNLEERI (109 aa)) is the Peptidase S74 domain. The stretch at 538–575 (GAVKQLCKLTNNLEERIEELEIWNKKLARLKRLSSSWK) forms a coiled coil. A helical membrane pass occupies residues 624–644 (LVVVLIAVMAFCALTIVALYI). The interval 656-688 (NLPLSNMTSSPEPALSSTAPTSAPHTTPETTQT) is disordered. The segment covering 663–688 (TSSPEPALSSTAPTSAPHTTPETTQT) has biased composition (low complexity).

It belongs to the MRF family.

It is found in the membrane. This is Myelin regulatory factor-like protein (Myrfl) from Mus musculus (Mouse).